A 419-amino-acid polypeptide reads, in one-letter code: UDP-N-acetylglucosamine 1-carboxyvinyltransferase (419 aa).

22–23 (KN) serves as a coordination point for phosphoenolpyruvate. Arg91 lines the UDP-N-acetyl-alpha-D-glucosamine pocket. Residue Cys115 is the Proton donor of the active site. Position 115 is a 2-(S-cysteinyl)pyruvic acid O-phosphothioketal (Cys115). UDP-N-acetyl-alpha-D-glucosamine-binding positions include 120 to 124 (RPVDL), 160 to 163 (KVSV), Asp305, and Ile327.

Belongs to the EPSP synthase family. MurA subfamily.

The protein resides in the cytoplasm. The enzyme catalyses phosphoenolpyruvate + UDP-N-acetyl-alpha-D-glucosamine = UDP-N-acetyl-3-O-(1-carboxyvinyl)-alpha-D-glucosamine + phosphate. It functions in the pathway cell wall biogenesis; peptidoglycan biosynthesis. Cell wall formation. Adds enolpyruvyl to UDP-N-acetylglucosamine. The chain is UDP-N-acetylglucosamine 1-carboxyvinyltransferase from Tolumonas auensis (strain DSM 9187 / NBRC 110442 / TA 4).